Consider the following 614-residue polypeptide: RNA polymerase sigma factor RpoD (614 aa).

The interval 178 to 222 is disordered; the sequence is THIGSDLSQSERDKDDSKDDSKDDDEDEEEEGPKGPDPEESKERF. Basic and acidic residues predominate over residues 186–198; it reads QSERDKDDSKDDS. Over residues 199–208 the composition is skewed to acidic residues; it reads KDDDEDEEEE. Positions 209–222 are enriched in basic and acidic residues; it reads GPKGPDPEESKERF. The interval 380–450 is sigma-70 factor domain-2; the sequence is MVEANLRLVI…TRSIADQART (71 aa). The short motif at 404 to 407 is the Interaction with polymerase core subunit RpoC element; sequence DLIQ. Positions 459–535 are sigma-70 factor domain-3; the sequence is ETINKLNRIS…DTTLELPLDS (77 aa). The sigma-70 factor domain-4 stretch occupies residues 548-601; sequence VLAGLTAREAKVLRMRFGIDMNTDHTLEEVGKQFDVTRERIRQIEAKALRKLRH. Positions 574–593 form a DNA-binding region, H-T-H motif; that stretch reads LEEVGKQFDVTRERIRQIEA.

Belongs to the sigma-70 factor family. RpoD/SigA subfamily. In terms of assembly, interacts transiently with the RNA polymerase catalytic core.

Its subcellular location is the cytoplasm. In terms of biological role, sigma factors are initiation factors that promote the attachment of RNA polymerase to specific initiation sites and are then released. This sigma factor is the primary sigma factor during exponential growth. The protein is RNA polymerase sigma factor RpoD of Shewanella violacea (strain JCM 10179 / CIP 106290 / LMG 19151 / DSS12).